The sequence spans 234 residues: Leucyl/phenylalanyl-tRNA--protein transferase (234 aa).

This sequence belongs to the L/F-transferase family.

The protein localises to the cytoplasm. It carries out the reaction N-terminal L-lysyl-[protein] + L-leucyl-tRNA(Leu) = N-terminal L-leucyl-L-lysyl-[protein] + tRNA(Leu) + H(+). It catalyses the reaction N-terminal L-arginyl-[protein] + L-leucyl-tRNA(Leu) = N-terminal L-leucyl-L-arginyl-[protein] + tRNA(Leu) + H(+). The catalysed reaction is L-phenylalanyl-tRNA(Phe) + an N-terminal L-alpha-aminoacyl-[protein] = an N-terminal L-phenylalanyl-L-alpha-aminoacyl-[protein] + tRNA(Phe). Functionally, functions in the N-end rule pathway of protein degradation where it conjugates Leu, Phe and, less efficiently, Met from aminoacyl-tRNAs to the N-termini of proteins containing an N-terminal arginine or lysine. The chain is Leucyl/phenylalanyl-tRNA--protein transferase from Pseudoalteromonas atlantica (strain T6c / ATCC BAA-1087).